Here is a 261-residue protein sequence, read N- to C-terminus: Ribosomal RNA small subunit methyltransferase G (261 aa).

S-adenosyl-L-methionine-binding positions include Gly-94, Leu-99, 117 to 119 (EST), 145 to 146 (VE), and Arg-164.

It belongs to the methyltransferase superfamily. RNA methyltransferase RsmG family.

It localises to the cytoplasm. Specifically methylates the N7 position of a guanine in 16S rRNA. This chain is Ribosomal RNA small subunit methyltransferase G, found in Rubrobacter xylanophilus (strain DSM 9941 / JCM 11954 / NBRC 16129 / PRD-1).